We begin with the raw amino-acid sequence, 1142 residues long: Fibronectin type-III domain-containing protein 3A (1142 aa).

The segment at 104 to 191 (YGDVDAHSTH…KSGKGKGGTQ (88 aa)) is disordered. Residues 107–145 (VDAHSTHGRSNFRDERSSKTYERLQKKLKDRQGTQKDKM) show a composition bias toward basic and acidic residues. The span at 146-158 (SSPPSSPQKCPSP) shows a compositional bias: low complexity. A phosphoserine mark is found at Ser-147, Ser-151, and Ser-157. Fibronectin type-III domains lie at 212-313 (NIVK…TLSC), 317-409 (IPNP…TSGC), 413-506 (MPAS…TCPD), 510-604 (IPVK…TPAV), 608-701 (PCLP…TAPG), 705-795 (QCKP…TPPS), 805-894 (EISD…TKPL), 895-989 (PPDP…TPKS), and 990-1095 (VPAA…TEPP). Residue Lys-328 is modified to N6-acetyllysine. The chain crosses the membrane as a helical span at residues 1121–1141 (NLVLFAFFSILIAFIIQYFVI).

It belongs to the FNDC3 family.

It is found in the golgi apparatus membrane. Functionally, mediates spermatid-Sertoli adhesion during spermatogenesis. The sequence is that of Fibronectin type-III domain-containing protein 3A (FNDC3A) from Pongo abelii (Sumatran orangutan).